The sequence spans 374 residues: Speckle-type POZ protein (374 aa).

One can recognise an MATH domain in the interval 31–161; that stretch reads KFSYMWTINN…DDKLTLFCEV (131 aa). Residues 71-191 are required for nuclear localization; it reads VNPKGLDEES…PDCRLADELG (121 aa). In terms of domain architecture, BTB spans 173–297; the sequence is QNTMNMVKVP…MCEDALCTSL (125 aa). Residues 297 to 355 are homodimerization; sequence LSVENAAEILILADLHSADQLKTQAVDFINYHASDVMETSGWKSMVASHPHLVAEAYRS.

Belongs to the Tdpoz family. Homodimer. Part of cullin-RING-based BCR (BTB-CUL3-RBX1) E3 ubiquitin-protein ligase complexes that contain CUL3 and SPOP, plus a target protein.

It is found in the nucleus. Its subcellular location is the nucleus speckle. Its pathway is protein modification; protein ubiquitination. Component of a cullin-RING-based BCR (BTB-CUL3-RBX1) E3 ubiquitin-protein ligase complex that mediates the ubiquitination of target proteins, leading most often to their proteasomal degradation. This Danio rerio (Zebrafish) protein is Speckle-type POZ protein (spop).